The chain runs to 505 residues: Probable alpha-L-arabinofuranosidase C (505 aa).

N-linked (GlcNAc...) asparagine glycans are attached at residues asparagine 81, asparagine 152, asparagine 269, and asparagine 438.

Belongs to the glycosyl hydrolase 51 family.

Its subcellular location is the secreted. The enzyme catalyses Hydrolysis of terminal non-reducing alpha-L-arabinofuranoside residues in alpha-L-arabinosides.. It functions in the pathway glycan metabolism; L-arabinan degradation. Alpha-L-arabinofuranosidase involved in the degradation of arabinoxylan, a major component of plant hemicellulose. Acts only on small linear 1,5-alpha-linked L-arabinofuranosyl oligosaccharides. The polypeptide is Probable alpha-L-arabinofuranosidase C (abfC) (Aspergillus fumigatus (strain ATCC MYA-4609 / CBS 101355 / FGSC A1100 / Af293) (Neosartorya fumigata)).